The sequence spans 794 residues: Zinc finger Y-chromosomal protein 1 (794 aa).

A Nuclear localization signal motif is present at residues 380-389; sequence TKQKLKKKRR. 13 consecutive C2H2-type zinc fingers follow at residues 411–433, 442–464, 477–499, 508–531, 537–559, 565–588, 594–616, 622–645, 651–673, 679–702, 708–730, 736–759, and 765–788; these read YPCM…MKNH, YRCT…LESH, LECE…KLTH, HICK…LAVH, HICV…MRTH, YLCQ…KTKH, FKCD…AILH, HQCL…ISVH, HKCE…EAAH, HQCR…LSVH, YRCK…MKTH, YQCE…ISIH, and HRCD…LKHH.

This sequence belongs to the krueppel C2H2-type zinc-finger protein family. ZFX/ZFY subfamily.

The protein resides in the nucleus. In terms of biological role, probable transcriptional activator. This is Zinc finger Y-chromosomal protein 1 (zfy1) from Xenopus laevis (African clawed frog).